A 1128-amino-acid polypeptide reads, in one-letter code: Translation initiation factor IF-2 (1128 aa).

The interval 57–519 is disordered; sequence NSDKQILSIN…KETTRQRQKR (463 aa). Residues 70-83 show a composition bias toward basic and acidic residues; it reads NKKDNYKQNKEDKS. Positions 100-110 are enriched in low complexity; that stretch reads KKQLLNKPLNK. Positions 120–146 are enriched in polar residues; it reads QLKNPNKPNIYNSSQSQANLTNQNTKS. Positions 147–158 are enriched in basic and acidic residues; it reads KPSEHFNKDKKT. Low complexity predominate over residues 182 to 196; it reads KNINNNLKSNESSKN. Residues 201-214 show a composition bias toward basic and acidic residues; sequence GDKRELSLKPDQNR. 2 stretches are compositionally biased toward polar residues: residues 243–267 and 386–397; these read KQNNKQNITFKQTVSNRPGTPNRPG and AKTNNQKQNIES. Residues 432–445 are compositionally biased toward basic and acidic residues; it reads RKDWDDSAKLEALR. A compositionally biased stretch (basic residues) spans 499–519; that stretch reads HKSTKQFKKKKKETTRQRQKR. The tr-type G domain occupies 620–792; it reads KRPPVITVMG…ILLVSEVEDL (173 aa). Residues 629 to 636 form a G1 region; that stretch reads GHVDHGKT. Residue 629–636 participates in GTP binding; it reads GHVDHGKT. The tract at residues 654 to 658 is G2; the sequence is GITQH. The tract at residues 679-682 is G3; the sequence is DTPG. GTP contacts are provided by residues 679–683 and 733–736; these read DTPGH and NKID. A G4 region spans residues 733 to 736; sequence NKID. The tract at residues 769–771 is G5; it reads SAI.

This sequence belongs to the TRAFAC class translation factor GTPase superfamily. Classic translation factor GTPase family. IF-2 subfamily.

The protein localises to the cytoplasm. One of the essential components for the initiation of protein synthesis. Protects formylmethionyl-tRNA from spontaneous hydrolysis and promotes its binding to the 30S ribosomal subunits. Also involved in the hydrolysis of GTP during the formation of the 70S ribosomal complex. This is Translation initiation factor IF-2 from Prochlorococcus marinus (strain MIT 9312).